Consider the following 221-residue polypeptide: Lysine N-acyltransferase MbtK (221 aa).

A disordered region spans residues 1-34; sequence MSDAPAESAPAQIDPAQTDPAEQPVQILPRERSD. His-141 contacts substrate. Asp-179 functions as the Proton acceptor in the catalytic mechanism.

Belongs to the lysine N-acyltransferase MbtK family. Monomer.

Its pathway is siderophore biosynthesis; mycobactin biosynthesis. In terms of biological role, acyltransferase required for the direct transfer of medium- to long-chain fatty acyl moieties from a carrier protein (MbtL) on to the epsilon-amino group of lysine residue in the mycobactin core. This is Lysine N-acyltransferase MbtK (mbtK) from Mycolicibacterium paratuberculosis (strain ATCC BAA-968 / K-10) (Mycobacterium paratuberculosis).